A 383-amino-acid chain; its full sequence is MNELEFVTKHRRHLHQHPELSLHEFETTAYIKAFLDSLNIKYDCPLETGVIAYLEGNGSHTIAYRADIDALPILEENDVPYRSQSDHVMHACGHDGHTTTLMLFVQRCKDMQDAGQLPQNVVFIFQPAEETGGGANRLIKAGAFDKYPIEAVFGIHVNPFADEGIAVIRDEEITASATEYRFFLTGLSSHVADKEQGHSCGEALQHVLTQISQIQQFHLNGLKRNIVHIGHFKAGEAINTVPSNGYLEGTIRTYDIDDLTIVKNQMHKIAESVKLLFNVDCEVKFAEGYPPTINSPKLRTQIEDALIKADLNVYDKPTPFLFGEDFSFYGQQLAPAYFVFIGTRNEDKGFVTGLHTSYLNFDEKVLINVVNFYENLLNNYKEV.

It belongs to the peptidase M20 family.

This is an uncharacterized protein from Staphylococcus aureus (strain MRSA252).